Here is a 68-residue protein sequence, read N- to C-terminus: Large ribosomal subunit protein bL33c (68 aa).

It belongs to the bacterial ribosomal protein bL33 family.

It localises to the plastid. The sequence is that of Large ribosomal subunit protein bL33c from Cuscuta reflexa (Southern Asian dodder).